The sequence spans 381 residues: Beta-lactamase CMY-2 (381 aa).

An N-terminal signal peptide occupies residues 1–20 (MMKKSLCCALLLTASFSTFA). The active-site Acyl-ester intermediate is Ser84. 4 residues coordinate a beta-lactam: Ser84, Gln140, Tyr170, and Asn172.

The protein belongs to the class-C beta-lactamase family.

It carries out the reaction a beta-lactam + H2O = a substituted beta-amino acid. Its activity is regulated as follows. Inhibited by the beta-lactamase-blocking agents sulbactam, tazobactam, avibactam and 3-aminophenylboronic acid (APB). Functionally, class C beta-lactamase which confers resistance to penicillins and cephalosporins. Has nitrocefin-, cefoxitin- and cefoperazone-hydrolyzing activities. This chain is Beta-lactamase CMY-2, found in Klebsiella pneumoniae.